The primary structure comprises 543 residues: Cytochrome P450 52A1 (543 aa).

Residues 1–28 (MSSSPSIAQEFLATITPYVEYCQENYTK) are Lumenal-facing. Residues 29–48 (WYYFIPLVILSLNLISMLHT) traverse the membrane as a helical segment. The Cytoplasmic portion of the chain corresponds to 49–543 (KYLERKFKAK…GAEVQMYLIL (495 aa)). Cys-487 provides a ligand contact to heme.

The protein belongs to the cytochrome P450 family. The cofactor is heme.

Its subcellular location is the endoplasmic reticulum membrane. Together with an NADPH cytochrome P450 the enzyme system catalyzes the terminal hydroxylation as the first step in the assimilation of alkanes and fatty acids. The protein is Cytochrome P450 52A1 (CYP52A1) of Candida tropicalis (Yeast).